We begin with the raw amino-acid sequence, 63 residues long: Alpha-conotoxin-like Sm1.3 (63 aa).

An N-terminal signal peptide occupies residues 1–16; it reads MFTVFLLVVLATTVVS. The propeptide occupies 17 to 43; the sequence is SPSDRASDGRNAAANEKASDVIALALK. Cystine bridges form between Cys45–Cys51 and Cys46–Cys59. Met58 is subject to Methionine sulfoxide; partial. Cys59 is subject to Cysteine amide; partial.

This sequence belongs to the conotoxin A superfamily. In terms of tissue distribution, expressed by the venom duct.

Its subcellular location is the secreted. Its function is as follows. Alpha-conotoxins act on postsynaptic membranes, they bind to the nicotinic acetylcholine receptors (nAChR) and thus inhibit them. In Conus stercusmuscarum (Fly-specked cone), this protein is Alpha-conotoxin-like Sm1.3.